We begin with the raw amino-acid sequence, 776 residues long: Protein SEY1 (776 aa).

Over 1 to 681 (MADRSAIQLI…KRSIITTRTH (681 aa)) the chain is Cytoplasmic. Residues 34-263 (GLDYHVISVF…TENYYFKPQY (230 aa)) form the GB1/RHD3-type G domain. 44–51 (GSQSSGKS) is a GTP binding site. The chain crosses the membrane as a helical span at residues 682–702 (IPPWIYVLLAVLGWNEFVAVI). Over 703–705 (RNP) the chain is Lumenal. A helical transmembrane segment spans residues 706–726 (LFVTLTLILGATFFVIHKFGL). At 727-776 (WGPVVNVVQSAVGETRTAIKDKLRQFVVEDHEVKESFEMKDFSKNEQKEK) the chain is on the cytoplasmic side.

This sequence belongs to the TRAFAC class dynamin-like GTPase superfamily. GB1/RHD3 GTPase family. RHD3 subfamily. As to quaternary structure, interacts with RTN1 and YOP1; GTP binding is not required for these interactions.

Its subcellular location is the endoplasmic reticulum membrane. Functionally, cooperates with the reticulon proteins RTN1 and RTN2 and the tubule-shaping DP1 family protein YOP1 to generate and maintain the structure of the tubular endoplasmic reticulum network. Has GTPase activity, which is required for its function in ER organization. In Saccharomyces cerevisiae (strain YJM789) (Baker's yeast), this protein is Protein SEY1.